Consider the following 118-residue polypeptide: Small ribosomal subunit protein uS13 (118 aa).

Residues Gly94–Lys118 are disordered.

Belongs to the universal ribosomal protein uS13 family. Part of the 30S ribosomal subunit. Forms a loose heterodimer with protein S19. Forms two bridges to the 50S subunit in the 70S ribosome.

Its function is as follows. Located at the top of the head of the 30S subunit, it contacts several helices of the 16S rRNA. In the 70S ribosome it contacts the 23S rRNA (bridge B1a) and protein L5 of the 50S subunit (bridge B1b), connecting the 2 subunits; these bridges are implicated in subunit movement. Contacts the tRNAs in the A and P-sites. In Shigella dysenteriae serotype 1 (strain Sd197), this protein is Small ribosomal subunit protein uS13.